Here is a 264-residue protein sequence, read N- to C-terminus: Granzyme K (264 aa).

Residues 1-24 (MTKFSSFSLFFLIVGAYMTHVCFN) form the signal peptide. Residues 25–26 (ME) constitute a propeptide, activation peptide. The region spanning 27 to 259 (IIGGKEVSPH…YQTWIKSNLV (233 aa)) is the Peptidase S1 domain. A disulfide bridge links Cys52 with Cys68. Catalysis depends on charge relay system residues His67 and Asp116. 3 disulfide bridges follow: Cys149/Cys220, Cys181/Cys199, and Cys210/Cys234. Ser214 acts as the Charge relay system in catalysis.

It belongs to the peptidase S1 family. Granzyme subfamily. In terms of tissue distribution, expressed in lung, spleen, thymus and peripheral blood leukocytes.

It is found in the secreted. Its subcellular location is the cytoplasmic granule. This Homo sapiens (Human) protein is Granzyme K (GZMK).